The sequence spans 186 residues: Acetyltransferase PA2578 (186 aa).

The 165-residue stretch at 12-176 (LQLVPFQLGH…NVVLMGLLRQ (165 aa)) folds into the N-acetyltransferase domain. CoA-binding positions include glutamine 37, 97 to 99 (IVL), glycine 105, asparagine 137, and 142 to 144 (HLY).

In terms of assembly, homodimer.

Catalyzes the transfer of an acetyl group from acetyl coenzyme A (AcCoA) to an acceptor substrate and releases both CoA and the acetylated product. It prefers the antibiotic chloramphenicol. The sequence is that of Acetyltransferase PA2578 from Pseudomonas aeruginosa (strain ATCC 15692 / DSM 22644 / CIP 104116 / JCM 14847 / LMG 12228 / 1C / PRS 101 / PAO1).